An 83-amino-acid chain; its full sequence is Omega-agatoxin-Aa4b (83 aa).

A signal peptide spans 1–20 (MKLCMTLLITAIAVVTFVVA). A propeptide spanning residues 21–35 (TQEESAEFNEVEESR) is cleaved from the precursor. Cystine bridges form between C39/C55, C47/C60, C54/C71, and C62/C69. A D-serine (Ser) modification is found at S81.

Belongs to the neurotoxin 02 (plectoxin) family. 03 (omega-agtx) subfamily. Post-translationally, the toxin with D-Ser (named omega-aga IVC) is 80-90 fold more potent than that with L-Ser (omega-aga IVB) against Cav2.1/CACNA1A (P-type) channels in rat cerebellar Purkinje neurons and is more resistant to proteases. The epimerization is done by the venom peptide isomerase heterodimer. In terms of tissue distribution, expressed by the venom gland.

Its subcellular location is the secreted. Its function is as follows. Antagonist of voltage-gated Cav2.1/CACNA1A (P-type) calcium channels. Paralyzes insect by blocking neuromuscular transmission. This is Omega-agatoxin-Aa4b from Agelenopsis aperta (North American funnel-web spider).